We begin with the raw amino-acid sequence, 29 residues long: Galanin (29 aa).

Residue alanine 29 is modified to Alanine amide.

This sequence belongs to the galanin family.

Its subcellular location is the secreted. Its function is as follows. Contracts smooth muscle of the gastrointestinal and genitourinary tract, regulates growth hormone release, modulates insulin release, and may be involved in the control of adrenal secretion. This chain is Galanin (GAL), found in Alligator mississippiensis (American alligator).